Here is a 345-residue protein sequence, read N- to C-terminus: Probable 1-aminocyclopropane-1-carboxylate deaminase (345 aa).

K58 bears the N6-(pyridoxal phosphate)lysine mark. S85 serves as the catalytic Nucleophile.

It belongs to the ACC deaminase/D-cysteine desulfhydrase family. The cofactor is pyridoxal 5'-phosphate.

It catalyses the reaction 1-aminocyclopropane-1-carboxylate + H2O = 2-oxobutanoate + NH4(+). Its function is as follows. Catalyzes a cyclopropane ring-opening reaction, the irreversible conversion of 1-aminocyclopropane-1-carboxylate (ACC) to ammonia and alpha-ketobutyrate. In Cryptococcus neoformans var. neoformans serotype D (strain JEC21 / ATCC MYA-565) (Filobasidiella neoformans), this protein is Probable 1-aminocyclopropane-1-carboxylate deaminase.